A 368-amino-acid chain; its full sequence is D-alanine--D-alanine ligase (368 aa).

In terms of domain architecture, ATP-grasp spans 141-350; it reads KMIWDYSGLP…YNELIMHLIE (210 aa). An ATP-binding site is contributed by 176-231; it reads EKDLEYPLFIKPCRAGSSVGAGMVKNRNELLEQAEESFLWDNKILVEACIEAREVE. Residues aspartate 303, glutamate 317, and asparagine 319 each contribute to the Mg(2+) site.

It belongs to the D-alanine--D-alanine ligase family. Mg(2+) is required as a cofactor. The cofactor is Mn(2+).

It is found in the cytoplasm. It carries out the reaction 2 D-alanine + ATP = D-alanyl-D-alanine + ADP + phosphate + H(+). It participates in cell wall biogenesis; peptidoglycan biosynthesis. Its function is as follows. Cell wall formation. The sequence is that of D-alanine--D-alanine ligase from Treponema denticola (strain ATCC 35405 / DSM 14222 / CIP 103919 / JCM 8153 / KCTC 15104).